The sequence spans 296 residues: Urease accessory protein UreD (296 aa).

Belongs to the UreD family. As to quaternary structure, ureD, UreF and UreG form a complex that acts as a GTP-hydrolysis-dependent molecular chaperone, activating the urease apoprotein by helping to assemble the nickel containing metallocenter of UreC. The UreE protein probably delivers the nickel.

Its subcellular location is the cytoplasm. Required for maturation of urease via the functional incorporation of the urease nickel metallocenter. The polypeptide is Urease accessory protein UreD (Nitrosococcus oceani (strain ATCC 19707 / BCRC 17464 / JCM 30415 / NCIMB 11848 / C-107)).